The following is a 258-amino-acid chain: MMNPLIIKLGGVLLDSEEALERLFSALVNYRESHQRPLVIVHGGGCVVDELMKGLNLPVKKKNGLRVTPADQIDIITGALAGTANKTLLAWAKKHQIAAVGLFLGDGDSVKVTQLDEELGHVGLAQPGSPKLINSLLENGYLPVVSSIGVTDEGQLMNVNADQAATALAATLGADLILLSDVSGILDGKGQRIAEMTAAKAEQLIEQGIITDGMIVKVNAALDAARTLGRPVDIASWRYAEQLPALFNGMPMGTRILA.

Residues 44 to 45 (GG), R66, and N158 contribute to the substrate site. ATP is bound by residues 181-186 (DVSGIL) and 209-211 (IIT).

The protein belongs to the acetylglutamate kinase family. ArgB subfamily. In terms of assembly, homodimer.

It localises to the cytoplasm. It catalyses the reaction N-acetyl-L-glutamate + ATP = N-acetyl-L-glutamyl 5-phosphate + ADP. It functions in the pathway amino-acid biosynthesis; L-arginine biosynthesis; N(2)-acetyl-L-ornithine from L-glutamate: step 2/4. Catalyzes the ATP-dependent phosphorylation of N-acetyl-L-glutamate. The sequence is that of Acetylglutamate kinase from Shigella flexneri.